Consider the following 598-residue polypeptide: Probable translation initiation factor IF-2 (598 aa).

Residues 3–225 form the tr-type G domain; that stretch reads LRCPIVSVLG…GLAQKFLEQK (223 aa). A G1 region spans residues 12–19; sequence GHVDHGKT. Residue 12-19 participates in GTP binding; sequence GHVDHGKT. The tract at residues 37-41 is G2; it reads GITQH. The segment at 76–79 is G3; it reads DTPG. Residues 76–80 and 130–133 contribute to the GTP site; these read DTPGH and NKVD. Positions 130–133 are G4; that stretch reads NKVD. Residues 200-202 form a G5 region; that stretch reads SAM.

Belongs to the TRAFAC class translation factor GTPase superfamily. Classic translation factor GTPase family. IF-2 subfamily.

Functionally, function in general translation initiation by promoting the binding of the formylmethionine-tRNA to ribosomes. Seems to function along with eIF-2. The chain is Probable translation initiation factor IF-2 from Methanococcus maripaludis (strain C7 / ATCC BAA-1331).